The following is a 797-amino-acid chain: Xaa-Pro dipeptidyl-peptidase (797 aa).

Active-site charge relay system residues include S370, D490, and H521.

This sequence belongs to the peptidase S15 family. Homodimer.

It is found in the cytoplasm. The enzyme catalyses Hydrolyzes Xaa-Pro-|- bonds to release unblocked, N-terminal dipeptides from substrates including Ala-Pro-|-p-nitroanilide and (sequentially) Tyr-Pro-|-Phe-Pro-|-Gly-Pro-|-Ile.. In terms of biological role, removes N-terminal dipeptides sequentially from polypeptides having unsubstituted N-termini provided that the penultimate residue is proline. The protein is Xaa-Pro dipeptidyl-peptidase of Lacticaseibacillus casei (strain BL23) (Lactobacillus casei).